The following is a 145-amino-acid chain: UPF0735 ACT domain-containing protein CPR_1404 (145 aa).

The ACT domain occupies 69 to 144 (IFNMVVTHEK…GVEKVEFVAM (76 aa)).

It belongs to the UPF0735 family.

In Clostridium perfringens (strain SM101 / Type A), this protein is UPF0735 ACT domain-containing protein CPR_1404.